The chain runs to 550 residues: Metal transporter Nramp4 (550 aa).

The segment covering 1-13 (MEEGAKIGREHEQ) has biased composition (basic and acidic residues). A disordered region spans residues 1–37 (MEEGAKIGREHEQQQQQHGRVNGSGRVAAVGGGSGGG). The span at 14 to 29 (QQQQHGRVNGSGRVAA) shows a compositional bias: low complexity. The next 12 membrane-spanning stretches (helical) occupy residues 72–92 (FLAH…PSNL), 105–125 (SLLW…SLAA), 151–171 (LWLL…LGTA), 177–197 (LLHI…FLIL), 207–227 (MEFT…MELG), 255–275 (VAMF…SLVL), 292–312 (FFLL…VAIV), 354–374 (VYGV…SYAG), 388–408 (IIYL…CSIG), 416–436 (IINI…IPLI), 457–477 (IAWI…CTSF), and 492–512 (AIIS…LIYL).

This sequence belongs to the NRAMP (TC 2.A.55) family.

Its subcellular location is the membrane. Its function is as follows. Probable metal transporter. In Oryza sativa subsp. japonica (Rice), this protein is Metal transporter Nramp4 (NRAMP4).